Here is a 366-residue protein sequence, read N- to C-terminus: Ribosomal RNA large subunit methyltransferase M (366 aa).

Residues Ser188, 221–224 (CPGG), Asp240, Asp260, and Asp277 contribute to the S-adenosyl-L-methionine site. The Proton acceptor role is filled by Lys306.

It belongs to the class I-like SAM-binding methyltransferase superfamily. RNA methyltransferase RlmE family. RlmM subfamily. Monomer.

It localises to the cytoplasm. The catalysed reaction is cytidine(2498) in 23S rRNA + S-adenosyl-L-methionine = 2'-O-methylcytidine(2498) in 23S rRNA + S-adenosyl-L-homocysteine + H(+). Its function is as follows. Catalyzes the 2'-O-methylation at nucleotide C2498 in 23S rRNA. This Salmonella newport (strain SL254) protein is Ribosomal RNA large subunit methyltransferase M.